The sequence spans 277 residues: Shikimate dehydrogenase (NADP(+)) (277 aa).

Shikimate is bound by residues 17-19 (SRS) and threonine 64. Lysine 68 serves as the catalytic Proton acceptor. Positions 88 and 103 each coordinate shikimate. Residues 128–132 (GAGGS) and leucine 217 each bind NADP(+). Tyrosine 219 serves as a coordination point for shikimate. NADP(+) is bound at residue glycine 240.

Belongs to the shikimate dehydrogenase family. As to quaternary structure, homodimer.

The enzyme catalyses shikimate + NADP(+) = 3-dehydroshikimate + NADPH + H(+). The protein operates within metabolic intermediate biosynthesis; chorismate biosynthesis; chorismate from D-erythrose 4-phosphate and phosphoenolpyruvate: step 4/7. Functionally, involved in the biosynthesis of the chorismate, which leads to the biosynthesis of aromatic amino acids. Catalyzes the reversible NADPH linked reduction of 3-dehydroshikimate (DHSA) to yield shikimate (SA). This Afipia carboxidovorans (strain ATCC 49405 / DSM 1227 / KCTC 32145 / OM5) (Oligotropha carboxidovorans) protein is Shikimate dehydrogenase (NADP(+)).